Here is a 694-residue protein sequence, read N- to C-terminus: Putative serine/threonine-protein kinase R679 (694 aa).

One can recognise a Protein kinase domain in the interval I167–T548. ATP contacts are provided by residues V173 to A181 and K196. D395 acts as the Proton acceptor in catalysis.

This sequence belongs to the protein kinase superfamily. Ser/Thr protein kinase family.

Its subcellular location is the virion. It carries out the reaction L-seryl-[protein] + ATP = O-phospho-L-seryl-[protein] + ADP + H(+). The catalysed reaction is L-threonyl-[protein] + ATP = O-phospho-L-threonyl-[protein] + ADP + H(+). The protein is Putative serine/threonine-protein kinase R679 of Acanthamoeba polyphaga (Amoeba).